Here is a 150-residue protein sequence, read N- to C-terminus: Peptide deformylase 1 (150 aa).

Fe cation is bound by residues cysteine 88 and histidine 130. Residue glutamate 131 is part of the active site. Histidine 134 is a Fe cation binding site.

The protein belongs to the polypeptide deformylase family. Fe(2+) is required as a cofactor.

The catalysed reaction is N-terminal N-formyl-L-methionyl-[peptide] + H2O = N-terminal L-methionyl-[peptide] + formate. Functionally, removes the formyl group from the N-terminal Met of newly synthesized proteins. Requires at least a dipeptide for an efficient rate of reaction. N-terminal L-methionine is a prerequisite for activity but the enzyme has broad specificity at other positions. This Clostridium acetobutylicum (strain ATCC 824 / DSM 792 / JCM 1419 / IAM 19013 / LMG 5710 / NBRC 13948 / NRRL B-527 / VKM B-1787 / 2291 / W) protein is Peptide deformylase 1.